A 612-amino-acid polypeptide reads, in one-letter code: Large ribosomal subunit assembly factor BipA (612 aa).

In terms of domain architecture, tr-type G spans 5–200 (NDLRNIAIIA…TIIKHVPAPV (196 aa)). GTP is bound by residues 17 to 22 (DHGKTT) and 130 to 133 (NKID).

The protein belongs to the TRAFAC class translation factor GTPase superfamily. Classic translation factor GTPase family. BipA subfamily. In terms of assembly, monomer.

It is found in the cytoplasm. The enzyme catalyses GTP + H2O = GDP + phosphate + H(+). Functionally, a 50S ribosomal subunit assembly protein with GTPase activity, required for 50S subunit assembly at low temperatures, may also play a role in translation. Binds GTP and analogs. Binds the 70S ribosome between the 30S and 50S subunits, in a similar position as ribosome-bound EF-G; it contacts a number of ribosomal proteins, both rRNAs and the A-site tRNA. This chain is Large ribosomal subunit assembly factor BipA, found in Bacillus subtilis (strain 168).